A 551-amino-acid chain; its full sequence is 2,3-bisphosphoglycerate-independent phosphoglycerate mutase (551 aa).

Residues aspartate 22 and serine 74 each contribute to the Mn(2+) site. Catalysis depends on serine 74, which acts as the Phosphoserine intermediate. Residues histidine 135, 165 to 166 (RD), arginine 201, arginine 208, and 281 to 284 (RGDR) each bind substrate. Aspartate 319 contacts Mn(2+). A substrate-binding site is contributed by lysine 356. Mn(2+) contacts are provided by aspartate 424, histidine 428, aspartate 465, histidine 466, and histidine 495.

This sequence belongs to the BPG-independent phosphoglycerate mutase family. Monomer. It depends on Mn(2+) as a cofactor.

The protein resides in the cytoplasm. The catalysed reaction is (2R)-2-phosphoglycerate = (2R)-3-phosphoglycerate. The protein operates within carbohydrate degradation; glycolysis; pyruvate from D-glyceraldehyde 3-phosphate: step 3/5. Functionally, catalyzes the interconversion of 2-phosphoglycerate (2-PGA) and 3-phosphoglycerate (3-PGA). This chain is 2,3-bisphosphoglycerate-independent phosphoglycerate mutase, found in Trypanosoma brucei brucei (strain 927/4 GUTat10.1).